Consider the following 424-residue polypeptide: DNA primase DnaG (424 aa).

Residues 171-245 enclose the Toprim domain; it reads DDIIVVEGRA…DVDFVARAPP (75 aa). The Mg(2+) site is built by E177, D219, and D221.

This sequence belongs to the archaeal DnaG primase family. In terms of assembly, forms a ternary complex with MCM helicase and DNA. The cofactor is Mg(2+).

The enzyme catalyses ssDNA + n NTP = ssDNA/pppN(pN)n-1 hybrid + (n-1) diphosphate.. Its function is as follows. RNA polymerase that catalyzes the synthesis of short RNA molecules used as primers for DNA polymerase during DNA replication. This Methanocaldococcus jannaschii (strain ATCC 43067 / DSM 2661 / JAL-1 / JCM 10045 / NBRC 100440) (Methanococcus jannaschii) protein is DNA primase DnaG.